A 236-amino-acid chain; its full sequence is MATPHINAVDGAFADTVLFPGDPLRAKYIAETFLENVEQVTDVRNMLGFTGTYKGVRISVMGSGMGIPSCSIYATELIKDYGVKNLIRVGTCGAISTDVKVRDVIIGMGACTDSQVNRLRFKGQDFAAICDYSLLSAVVKAAEEKGTKYRVGNVFSADLFYTPDPEMFDVMEKMDVLGVEMEAAGLYGVAKEFGAKALCVVTVSDHIRTGEKTSSDERQTTFNEMIEMTLEAAITL.

His5 lines the a purine D-ribonucleoside pocket. Phosphate contacts are provided by residues Gly21, Arg25, Arg44, and 88 to 91 (RVGT). A purine D-ribonucleoside-binding positions include 180 to 182 (EME) and 204 to 205 (SD). Catalysis depends on Asp205, which acts as the Proton donor.

The protein belongs to the PNP/UDP phosphorylase family. In terms of assembly, homohexamer; trimer of homodimers.

It catalyses the reaction a purine D-ribonucleoside + phosphate = a purine nucleobase + alpha-D-ribose 1-phosphate. The enzyme catalyses a purine 2'-deoxy-D-ribonucleoside + phosphate = a purine nucleobase + 2-deoxy-alpha-D-ribose 1-phosphate. In terms of biological role, catalyzes the reversible phosphorolytic breakdown of the N-glycosidic bond in the beta-(deoxy)ribonucleoside molecules, with the formation of the corresponding free purine bases and pentose-1-phosphate. This chain is Purine nucleoside phosphorylase DeoD-type, found in Shewanella loihica (strain ATCC BAA-1088 / PV-4).